A 406-amino-acid polypeptide reads, in one-letter code: Glutamyl-tRNA reductase (406 aa).

Residues 49-52 (TCHR), S107, 112-114 (EPQ), and Q118 each bind substrate. The active-site Nucleophile is the C50. 187-192 (GAGETG) contacts NADP(+).

It belongs to the glutamyl-tRNA reductase family. In terms of assembly, homodimer.

The catalysed reaction is (S)-4-amino-5-oxopentanoate + tRNA(Glu) + NADP(+) = L-glutamyl-tRNA(Glu) + NADPH + H(+). It functions in the pathway porphyrin-containing compound metabolism; protoporphyrin-IX biosynthesis; 5-aminolevulinate from L-glutamyl-tRNA(Glu): step 1/2. In terms of biological role, catalyzes the NADPH-dependent reduction of glutamyl-tRNA(Glu) to glutamate 1-semialdehyde (GSA). This Thermomicrobium roseum (strain ATCC 27502 / DSM 5159 / P-2) protein is Glutamyl-tRNA reductase.